Reading from the N-terminus, the 153-residue chain is MAQEIRAIVRIGDTDLDGNKTVAYALAKIRGIGIATAYAICRKLGIDPHATLGLLPEDQINKLDWAVRNLHELAPAWFLNRRKDPETGRDLHLIGSELVLAAKRDVDLMKKLKSWKGIRHSLGLKVRGQRTVTTGRFGATAGVTKKKAAPGGK.

It belongs to the universal ribosomal protein uS13 family. As to quaternary structure, part of the 30S ribosomal subunit. Forms a loose heterodimer with protein S19. Forms two bridges to the 50S subunit in the 70S ribosome.

Located at the top of the head of the 30S subunit, it contacts several helices of the 16S rRNA. In the 70S ribosome it contacts the 23S rRNA (bridge B1a) and protein L5 of the 50S subunit (bridge B1b), connecting the 2 subunits; these bridges are implicated in subunit movement. In Pyrobaculum calidifontis (strain DSM 21063 / JCM 11548 / VA1), this protein is Small ribosomal subunit protein uS13.